Here is a 171-residue protein sequence, read N- to C-terminus: Large ribosomal subunit protein uL5 (171 aa).

Belongs to the universal ribosomal protein uL5 family. In terms of assembly, part of the 50S ribosomal subunit; contacts the 5S rRNA and probably tRNA. Forms a bridge to the 30S subunit in the 70S ribosome.

In terms of biological role, this is one of the proteins that bind and probably mediate the attachment of the 5S RNA into the large ribosomal subunit, where it forms part of the central protuberance. In the 70S ribosome it contacts protein S13 of the 30S subunit (bridge B1b), connecting the 2 subunits; this bridge is implicated in subunit movement. May contact the P site tRNA; the 5S rRNA and some of its associated proteins might help stabilize positioning of ribosome-bound tRNAs. The polypeptide is Large ribosomal subunit protein uL5 (Methanocorpusculum labreanum (strain ATCC 43576 / DSM 4855 / Z)).